A 571-amino-acid polypeptide reads, in one-letter code: Urease subunit alpha (571 aa).

The Urease domain occupies 132–571 (GGIDAHIHFI…VALAQRYFLF (440 aa)). Ni(2+) is bound by residues histidine 137, histidine 139, and lysine 220. Lysine 220 carries the N6-carboxylysine modification. Histidine 222 contacts substrate. Residues histidine 249 and histidine 275 each contribute to the Ni(2+) site. The active-site Proton donor is the histidine 323. Aspartate 363 provides a ligand contact to Ni(2+).

The protein belongs to the metallo-dependent hydrolases superfamily. Urease alpha subunit family. Heterotrimer of UreA (gamma), UreB (beta) and UreC (alpha) subunits. Three heterotrimers associate to form the active enzyme. It depends on Ni cation as a cofactor. Post-translationally, carboxylation allows a single lysine to coordinate two nickel ions.

It is found in the cytoplasm. The enzyme catalyses urea + 2 H2O + H(+) = hydrogencarbonate + 2 NH4(+). The protein operates within nitrogen metabolism; urea degradation; CO(2) and NH(3) from urea (urease route): step 1/1. The protein is Urease subunit alpha of Halalkalibacterium halodurans (strain ATCC BAA-125 / DSM 18197 / FERM 7344 / JCM 9153 / C-125) (Bacillus halodurans).